The sequence spans 303 residues: Catechol 1,2-dioxygenase (303 aa).

The Fe cation site is built by Tyr-156, Tyr-191, His-215, and His-217.

Homodimer. The cofactor is Fe(3+).

The enzyme catalyses catechol + O2 = cis,cis-muconate + 2 H(+). It functions in the pathway aromatic compound metabolism; beta-ketoadipate pathway; 5-oxo-4,5-dihydro-2-furylacetate from catechol: step 1/3. With respect to regulation, inhibited by Ag(+), Cu(+), Hg(2+) and Pb(2+). In terms of biological role, can cleave 4-methylcatechol at lower rates than catechol, but has no activity with 3-methylcatechol, 4-chlorocatechol, 4-carboxycatechol or hydroxyquinol. The polypeptide is Catechol 1,2-dioxygenase (HQD2) (Candida albicans (strain SC5314 / ATCC MYA-2876) (Yeast)).